The primary structure comprises 164 residues: Flavodoxin (164 aa).

The Flavodoxin-like domain maps to 4–160; that stretch reads IGIFFGTDSG…RISKWVEQVK (157 aa).

This sequence belongs to the flavodoxin family. FMN is required as a cofactor.

Its function is as follows. Low-potential electron donor to a number of redox enzymes. The polypeptide is Flavodoxin (fldA) (Helicobacter pylori (strain ATCC 700392 / 26695) (Campylobacter pylori)).